Consider the following 133-residue polypeptide: Small ribosomal subunit protein uS8 (133 aa).

It belongs to the universal ribosomal protein uS8 family. As to quaternary structure, part of the 30S ribosomal subunit. Contacts proteins S5 and S12.

In terms of biological role, one of the primary rRNA binding proteins, it binds directly to 16S rRNA central domain where it helps coordinate assembly of the platform of the 30S subunit. This Synechocystis sp. (strain ATCC 27184 / PCC 6803 / Kazusa) protein is Small ribosomal subunit protein uS8.